Reading from the N-terminus, the 425-residue chain is Serine--tRNA ligase (425 aa).

L-serine is bound at residue 233 to 235 (TAE). 264 to 266 (RRE) contacts ATP. Position 287 (glutamate 287) interacts with L-serine. 351–354 (EISS) contributes to the ATP binding site. Serine 385 lines the L-serine pocket.

Belongs to the class-II aminoacyl-tRNA synthetase family. Type-1 seryl-tRNA synthetase subfamily. Homodimer. The tRNA molecule binds across the dimer.

The protein localises to the cytoplasm. The catalysed reaction is tRNA(Ser) + L-serine + ATP = L-seryl-tRNA(Ser) + AMP + diphosphate + H(+). It catalyses the reaction tRNA(Sec) + L-serine + ATP = L-seryl-tRNA(Sec) + AMP + diphosphate + H(+). It functions in the pathway aminoacyl-tRNA biosynthesis; selenocysteinyl-tRNA(Sec) biosynthesis; L-seryl-tRNA(Sec) from L-serine and tRNA(Sec): step 1/1. Catalyzes the attachment of serine to tRNA(Ser). Is also able to aminoacylate tRNA(Sec) with serine, to form the misacylated tRNA L-seryl-tRNA(Sec), which will be further converted into selenocysteinyl-tRNA(Sec). This Synechococcus sp. (strain CC9902) protein is Serine--tRNA ligase.